A 105-amino-acid polypeptide reads, in one-letter code: Protein LBH (105 aa).

Positions 18–104 (MTEVMMNTQP…CEETAKENKE (87 aa)) constitute an LBH domain. The residue at position 63 (S63) is a Phosphoserine. The segment covering 86 to 96 (LVQEDEQDNCE) has biased composition (acidic residues). The interval 86-105 (LVQEDEQDNCEETAKENKEQ) is disordered.

Belongs to the LBH family. In terms of tissue distribution, highly expressed in heart, and expressed at low levels in placenta, lung, skeletal muscle, kidney and liver.

Its subcellular location is the nucleus. The protein resides in the cytoplasm. Its function is as follows. Transcriptional activator which may act in mitogen-activated protein kinase signaling pathway. This is Protein LBH from Homo sapiens (Human).